The chain runs to 631 residues: Shootin-1 (631 aa).

At Met-1 the chain carries N-acetylmethionine. Phosphoserine is present on residues Ser-3 and Ser-4. Positions 7–353 (EKQLQLITSL…RVNQSENSVP (347 aa)) form a coiled coil. Ser-101 carries the post-translational modification Phosphoserine; by PAK1. Ser-249 carries the post-translational modification Phosphoserine. Positions 343-511 (KRVNQSENSV…SESKSMPVLG (169 aa)) are disordered. A compositionally biased stretch (pro residues) spans 352 to 369 (VPPPPPPPPPLPPPPPNP). Phosphoserine is present on Ser-375. Residues 403 to 418 (TDLKRQAVEEMMDRIK) show a composition bias toward basic and acidic residues. The segment covering 456 to 465 (LNKSTSSRSL) has biased composition (polar residues). Ser-473 is subject to Phosphoserine. Thr-487 is modified (phosphothreonine). Residues 490–505 (ADSSSPTGILATSESK) are compositionally biased toward polar residues. Ser-494 carries the phosphoserine modification. Position 496 is a phosphothreonine (Thr-496). 4 positions are modified to phosphoserine: Ser-506, Ser-515, Ser-532, and Ser-534. Disordered regions lie at residues 524 to 566 (KTLE…IGCR) and 579 to 631 (VVVL…SSNC). Thr-537 carries the post-translational modification Phosphothreonine. Over residues 550 to 561 (CTSSKVTFQPPS) the composition is skewed to polar residues. Over residues 590-631 (PQTKDQVAEKDPTQHKEDEGEIQPENKEDSIENVRETDSSNC) the composition is skewed to basic and acidic residues.

Belongs to the shootin family. In terms of assembly, interacts with L1CAM; this interaction occurs in axonal growth cones. Interacts with actin filament retrograde flow; this interaction is enhanced in a netrin-1- and PAK1-dependent manner and promotes F-actin-substrate coupling and concomitant formation of traction forces at axonal growth cones. Interacts with RUFY3. Interacts with PFN2. Interacts (via N-terminus) with KIF20B; this interaction is direct and promotes the association of SHTN1 to microtubules in primary neurons. Associates with microtubule. Post-translationally, phosphorylated on Ser-101 and Ser-249 by PAK1 through a CDC42- and RAC1-dependent signaling pathway, which enhances its association with F-actin retrograde flow in filopodia and lamellipodia of axonal growth cones. Phosphorylation on Ser-101 and Ser-249 is increased by netrin-1.

Its subcellular location is the perikaryon. The protein localises to the cell projection. The protein resides in the axon. It localises to the growth cone. It is found in the cytoplasm. Its subcellular location is the cytoskeleton. The protein localises to the filopodium. The protein resides in the lamellipodium. Functionally, involved in the generation of internal asymmetric signals required for neuronal polarization and neurite outgrowth. Mediates netrin-1-induced F-actin-substrate coupling or 'clutch engagement' within the axon growth cone through activation of CDC42, RAC1 and PAK1-dependent signaling pathway, thereby converting the F-actin retrograde flow into traction forces, concomitantly with filopodium extension and axon outgrowth. Plays a role in cytoskeletal organization by regulating the subcellular localization of phosphoinositide 3-kinase (PI3K) activity at the axonal growth cone. Also plays a role in regenerative neurite outgrowth. In the developing cortex, cooperates with KIF20B to promote both the transition from the multipolar to the bipolar stage and the radial migration of cortical neurons from the ventricular zone toward the superficial layer of the neocortex. Involved in the accumulation of phosphatidylinositol 3,4,5-trisphosphate (PIP3) in the growth cone of primary hippocampal neurons. This chain is Shootin-1, found in Homo sapiens (Human).